The primary structure comprises 47 residues: Large ribosomal subunit protein bL34 (47 aa).

The protein belongs to the bacterial ribosomal protein bL34 family.

This Mycobacterium leprae (strain TN) protein is Large ribosomal subunit protein bL34 (rpmH).